The primary structure comprises 507 residues: Congo red hypersensitive protein 1 (507 aa).

Residues 1-22 (MKVLDLLTVLSASSLLSTFAAA) form the signal peptide. The 227-residue stretch at 34 to 260 (ASSTASCNPL…KVIVTDYSTG (227 aa)) folds into the GH16 domain. Cysteines 40 and 48 form a disulfide. An N-linked (GlcNAc...) asparagine glycan is attached at asparagine 117. Glutamate 134 (nucleophile) is an active-site residue. Glutamate 138 (proton donor) is an active-site residue. Glutamate 138 serves as a coordination point for chitin. Asparagine 177 and asparagine 201 each carry an N-linked (GlcNAc...) asparagine glycan. The chitin site is built by tryptophan 219 and threonine 230. Disordered regions lie at residues 329-368 (SSSA…SSKT) and 381-478 (SSFE…TNSV). 2 stretches are compositionally biased toward low complexity: residues 381-439 (SSFE…PVQD) and 451-477 (TSST…STNS). The GPI-anchor amidated asparagine moiety is linked to residue asparagine 482. Residues 483–507 (GADLAQSLPREGKLFSVLVALLALL) constitute a propeptide, removed in mature form.

This sequence belongs to the glycosyl hydrolase 16 family. CRH1 subfamily. The GPI-anchor is attached to the protein in the endoplasmic reticulum and serves to target the protein to the cell surface. There, the glucosamine-inositol phospholipid moiety is cleaved off and the GPI-modified mannoprotein is covalently attached via its lipidless GPI glycan remnant to the 1,6-beta-glucan of the outer cell wall layer.

It is found in the secreted. Its subcellular location is the cell wall. The protein localises to the membrane. It carries out the reaction Random endo-hydrolysis of N-acetyl-beta-D-glucosaminide (1-&gt;4)-beta-linkages in chitin and chitodextrins.. Its function is as follows. Dual chitinase/transglycosylase that plays a role in cell wall architecture. Chitinase and transglycosylase activities are coupled. Required for the polysaccharide cross-linking at the septa and the cell wall. More specifically, transfers chitin to both beta(1-3)- and beta(1-6)glucan in the cell wall. The minimal number of intact hexopyranose units required in the molecule of the acceptor oligosaccharide is two and the effectivity of the acceptor increased with the increasing length of its oligosaccharide chain. In Saccharomyces cerevisiae (strain ATCC 204508 / S288c) (Baker's yeast), this protein is Congo red hypersensitive protein 1.